A 203-amino-acid chain; its full sequence is Glycerol-3-phosphate acyltransferase (203 aa).

Transmembrane regions (helical) follow at residues 4–24, 68–88, 117–137, and 155–175; these read LALI…AVLI, IPVW…VIAI, PIGL…AVLF, and TWMF…LIVF.

The protein belongs to the PlsY family. As to quaternary structure, probably interacts with PlsX.

The protein resides in the cell inner membrane. The enzyme catalyses an acyl phosphate + sn-glycerol 3-phosphate = a 1-acyl-sn-glycero-3-phosphate + phosphate. It participates in lipid metabolism; phospholipid metabolism. Functionally, catalyzes the transfer of an acyl group from acyl-phosphate (acyl-PO(4)) to glycerol-3-phosphate (G3P) to form lysophosphatidic acid (LPA). This enzyme utilizes acyl-phosphate as fatty acyl donor, but not acyl-CoA or acyl-ACP. In Vibrio campbellii (strain ATCC BAA-1116), this protein is Glycerol-3-phosphate acyltransferase.